We begin with the raw amino-acid sequence, 195 residues long: Probable GTP-binding protein EngB (195 aa).

Residues 24 to 195 form the EngB-type G domain; that stretch reads ELPEIALAGR…EAWDAILEKL (172 aa). GTP-binding positions include 32–39, 59–63, 77–80, 144–147, and 176–178; these read GRSNVGKS, GKTQL, DVPG, TKAD, and FSS. Ser39 and Thr61 together coordinate Mg(2+).

It belongs to the TRAFAC class TrmE-Era-EngA-EngB-Septin-like GTPase superfamily. EngB GTPase family. The cofactor is Mg(2+).

Functionally, necessary for normal cell division and for the maintenance of normal septation. The polypeptide is Probable GTP-binding protein EngB (Streptococcus pneumoniae (strain JJA)).